The sequence spans 364 residues: 3-dehydroquinate synthase (364 aa).

NAD(+) is bound by residues 73–78 (DGEQNK), 107–111 (GVIGD), 131–132 (TT), Lys144, Lys153, and 171–174 (CLCT). Residues Glu186, His249, and His266 each contribute to the Zn(2+) site.

The protein belongs to the sugar phosphate cyclases superfamily. Dehydroquinate synthase family. The cofactor is NAD(+). Requires Co(2+) as cofactor. It depends on Zn(2+) as a cofactor.

The protein resides in the cytoplasm. It carries out the reaction 7-phospho-2-dehydro-3-deoxy-D-arabino-heptonate = 3-dehydroquinate + phosphate. It functions in the pathway metabolic intermediate biosynthesis; chorismate biosynthesis; chorismate from D-erythrose 4-phosphate and phosphoenolpyruvate: step 2/7. Its function is as follows. Catalyzes the conversion of 3-deoxy-D-arabino-heptulosonate 7-phosphate (DAHP) to dehydroquinate (DHQ). The protein is 3-dehydroquinate synthase of Blochmanniella floridana.